Reading from the N-terminus, the 400-residue chain is Queuine tRNA-ribosyltransferase (400 aa).

Residue Asp93 is the Proton acceptor of the active site. Residues 93 to 97, Asp166, and Gly247 each bind substrate; that span reads DSGGF. The tract at residues 277–283 is RNA binding; that stretch reads GIGDVDD. The active-site Nucleophile is Asp296. Positions 301–305 are RNA binding; important for wobble base 34 recognition; sequence TRLGR. Residues Cys338, Cys340, Cys343, and His369 each coordinate Zn(2+).

The protein belongs to the queuine tRNA-ribosyltransferase family. Homodimer. Within each dimer, one monomer is responsible for RNA recognition and catalysis, while the other monomer binds to the replacement base PreQ1. Zn(2+) is required as a cofactor.

The enzyme catalyses 7-aminomethyl-7-carbaguanine + guanosine(34) in tRNA = 7-aminomethyl-7-carbaguanosine(34) in tRNA + guanine. Its pathway is tRNA modification; tRNA-queuosine biosynthesis. Catalyzes the base-exchange of a guanine (G) residue with the queuine precursor 7-aminomethyl-7-deazaguanine (PreQ1) at position 34 (anticodon wobble position) in tRNAs with GU(N) anticodons (tRNA-Asp, -Asn, -His and -Tyr). Catalysis occurs through a double-displacement mechanism. The nucleophile active site attacks the C1' of nucleotide 34 to detach the guanine base from the RNA, forming a covalent enzyme-RNA intermediate. The proton acceptor active site deprotonates the incoming PreQ1, allowing a nucleophilic attack on the C1' of the ribose to form the product. After dissociation, two additional enzymatic reactions on the tRNA convert PreQ1 to queuine (Q), resulting in the hypermodified nucleoside queuosine (7-(((4,5-cis-dihydroxy-2-cyclopenten-1-yl)amino)methyl)-7-deazaguanosine). The polypeptide is Queuine tRNA-ribosyltransferase (Roseiflexus sp. (strain RS-1)).